A 440-amino-acid chain; its full sequence is MRSTELVHWFRQSTPYVNMHRGKTFVIMLDGDTIACPNFVNIINDISLLHSLGIKLVLVFGARYQINELLQQHQIESVYHKNIRITDLTSLELVKQAVGKLNYDIASRLSLRLPHSPLIDVVSGNFVLAQPIGVDDGIDYQLSGKIRRINTESIQQQLDRDAIVLIGPIAPSVTGESFNLPFEEIASQLAIKLKAEKLIGFSATQGILDENNQTISDLLPQDAELYLAKLIQQNQYHSSQARFLQAAIEACRFGIKRSHLISYEEDGSLLQELFTRDGVGTQLSMEHSETIRLATVSDIPALLELIRPLEQQGILVKRSREQLEMEINQYTIIDRDGVIIACAALNCYADEKMAEMACVAVHPDYRNSSRGDILLEAIQKRAKQLGIEKLFVLTTRTVHWFQERGFQLAEIADLPDKKRQHYNYQRRSKILIQALQNKKG.

The N-acetyltransferase domain occupies 289–429; the sequence is ETIRLATVSD…QHYNYQRRSK (141 aa).

The protein belongs to the acetyltransferase family. ArgA subfamily.

It is found in the cytoplasm. The catalysed reaction is L-glutamate + acetyl-CoA = N-acetyl-L-glutamate + CoA + H(+). Its pathway is amino-acid biosynthesis; L-arginine biosynthesis; N(2)-acetyl-L-ornithine from L-glutamate: step 1/4. The protein is Amino-acid acetyltransferase (argA) of Pasteurella multocida (strain Pm70).